Reading from the N-terminus, the 170-residue chain is Peptide deformylase 2 (170 aa).

Fe cation-binding residues include Cys94 and His136. The active site involves Glu137. His140 serves as a coordination point for Fe cation.

This sequence belongs to the polypeptide deformylase family. Requires Fe(2+) as cofactor.

The catalysed reaction is N-terminal N-formyl-L-methionyl-[peptide] + H2O = N-terminal L-methionyl-[peptide] + formate. Functionally, removes the formyl group from the N-terminal Met of newly synthesized proteins. Requires at least a dipeptide for an efficient rate of reaction. N-terminal L-methionine is a prerequisite for activity but the enzyme has broad specificity at other positions. In Xanthomonas campestris pv. campestris (strain ATCC 33913 / DSM 3586 / NCPPB 528 / LMG 568 / P 25), this protein is Peptide deformylase 2.